The chain runs to 156 residues: Phosphoribosyl-AMP cyclohydrolase (156 aa).

Mg(2+) is bound at residue Asp106. Zn(2+) is bound at residue Cys107. Mg(2+) contacts are provided by Asp108 and Asp110. Cys123 and Cys130 together coordinate Zn(2+).

The protein belongs to the PRA-CH family. Homodimer. Requires Mg(2+) as cofactor. It depends on Zn(2+) as a cofactor.

It localises to the cytoplasm. It catalyses the reaction 1-(5-phospho-beta-D-ribosyl)-5'-AMP + H2O = 1-(5-phospho-beta-D-ribosyl)-5-[(5-phospho-beta-D-ribosylamino)methylideneamino]imidazole-4-carboxamide. It functions in the pathway amino-acid biosynthesis; L-histidine biosynthesis; L-histidine from 5-phospho-alpha-D-ribose 1-diphosphate: step 3/9. In terms of biological role, catalyzes the hydrolysis of the adenine ring of phosphoribosyl-AMP. This Gluconobacter oxydans (strain 621H) (Gluconobacter suboxydans) protein is Phosphoribosyl-AMP cyclohydrolase.